A 120-amino-acid chain; its full sequence is Small ribosomal subunit protein uS12 (120 aa).

At aspartate 88 the chain carries 3-methylthioaspartic acid.

It belongs to the universal ribosomal protein uS12 family. In terms of assembly, part of the 30S ribosomal subunit. Contacts proteins S8 and S17. May interact with IF1 in the 30S initiation complex.

With S4 and S5 plays an important role in translational accuracy. Functionally, interacts with and stabilizes bases of the 16S rRNA that are involved in tRNA selection in the A site and with the mRNA backbone. Located at the interface of the 30S and 50S subunits, it traverses the body of the 30S subunit contacting proteins on the other side and probably holding the rRNA structure together. The combined cluster of proteins S8, S12 and S17 appears to hold together the shoulder and platform of the 30S subunit. The chain is Small ribosomal subunit protein uS12 from Carsonella ruddii (strain PV).